Here is a 205-residue protein sequence, read N- to C-terminus: Putative 3-methyladenine DNA glycosylase (205 aa).

It belongs to the DNA glycosylase MPG family.

The polypeptide is Putative 3-methyladenine DNA glycosylase (Staphylococcus epidermidis (strain ATCC 35984 / DSM 28319 / BCRC 17069 / CCUG 31568 / BM 3577 / RP62A)).